A 319-amino-acid chain; its full sequence is Lipoyl synthase (319 aa).

Residues Cys-66, Cys-71, Cys-77, Cys-92, Cys-96, Cys-99, and Ser-305 each coordinate [4Fe-4S] cluster. One can recognise a Radical SAM core domain in the interval 78–294 (FNRGTATFMI…KKEALSIGFT (217 aa)).

It belongs to the radical SAM superfamily. Lipoyl synthase family. [4Fe-4S] cluster is required as a cofactor.

The protein resides in the cytoplasm. The catalysed reaction is [[Fe-S] cluster scaffold protein carrying a second [4Fe-4S](2+) cluster] + N(6)-octanoyl-L-lysyl-[protein] + 2 oxidized [2Fe-2S]-[ferredoxin] + 2 S-adenosyl-L-methionine + 4 H(+) = [[Fe-S] cluster scaffold protein] + N(6)-[(R)-dihydrolipoyl]-L-lysyl-[protein] + 4 Fe(3+) + 2 hydrogen sulfide + 2 5'-deoxyadenosine + 2 L-methionine + 2 reduced [2Fe-2S]-[ferredoxin]. It participates in protein modification; protein lipoylation via endogenous pathway; protein N(6)-(lipoyl)lysine from octanoyl-[acyl-carrier-protein]: step 2/2. Its function is as follows. Catalyzes the radical-mediated insertion of two sulfur atoms into the C-6 and C-8 positions of the octanoyl moiety bound to the lipoyl domains of lipoate-dependent enzymes, thereby converting the octanoylated domains into lipoylated derivatives. In Buchnera aphidicola subsp. Schizaphis graminum (strain Sg), this protein is Lipoyl synthase.